A 139-amino-acid chain; its full sequence is Type II methyltransferase M.AquIB (139 aa).

Residues 1 to 135 form the SAM-dependent MTase C5-type domain; that stretch reads MDIKNVHIKN…KAVSEQLLDV (135 aa). Residues 38–58 form a disordered region; sequence KTFGSTYRRLDPNQPSPTVTR.

Belongs to the class I-like SAM-binding methyltransferase superfamily. C5-methyltransferase family. In terms of assembly, heterodimer of an alpha and a beta subunit.

It catalyses the reaction a 2'-deoxycytidine in DNA + S-adenosyl-L-methionine = a 5-methyl-2'-deoxycytidine in DNA + S-adenosyl-L-homocysteine + H(+). In terms of biological role, a methylase, recognizes the double-stranded sequence 5'-CYCGRG-3', methylates C-1 on both strands, and protects the DNA from cleavage by the AquI endonuclease. This is Type II methyltransferase M.AquIB (aquIMB) from Picosynechococcus sp. (strain ATCC 27264 / PCC 7002 / PR-6) (Agmenellum quadruplicatum).